The primary structure comprises 233 residues: Probable septum site-determining protein MinC (233 aa).

A disordered region spans residues 98–123 (LTEGKEKAPRPAPSEPTPPPPPVANQ). A compositionally biased stretch (pro residues) spans 107–120 (RPAPSEPTPPPPPV).

It belongs to the MinC family. In terms of assembly, interacts with MinD and FtsZ.

Cell division inhibitor that blocks the formation of polar Z ring septums. Rapidly oscillates between the poles of the cell to destabilize FtsZ filaments that have formed before they mature into polar Z rings. Prevents FtsZ polymerization. The polypeptide is Probable septum site-determining protein MinC (Klebsiella pneumoniae (strain 342)).